A 251-amino-acid chain; its full sequence is Phosphoribosylaminoimidazole-succinocarboxamide synthase (251 aa).

It belongs to the SAICAR synthetase family.

It carries out the reaction 5-amino-1-(5-phospho-D-ribosyl)imidazole-4-carboxylate + L-aspartate + ATP = (2S)-2-[5-amino-1-(5-phospho-beta-D-ribosyl)imidazole-4-carboxamido]succinate + ADP + phosphate + 2 H(+). It functions in the pathway purine metabolism; IMP biosynthesis via de novo pathway; 5-amino-1-(5-phospho-D-ribosyl)imidazole-4-carboxamide from 5-amino-1-(5-phospho-D-ribosyl)imidazole-4-carboxylate: step 1/2. This chain is Phosphoribosylaminoimidazole-succinocarboxamide synthase, found in Ruegeria pomeroyi (strain ATCC 700808 / DSM 15171 / DSS-3) (Silicibacter pomeroyi).